The chain runs to 92 residues: Acyl-CoA-binding domain-containing protein 6 (92 aa).

The ACB domain maps to 3-88 (LKEEFEEHAE…VKQLLEVAAS (86 aa)). Residues 30 to 34 (YGLYK), Lys52, Lys56, and Tyr75 contribute to the an acyl-CoA site.

This sequence belongs to the ACBP family. As to quaternary structure, interacts with PDLP8. Mostly expressed in seeds, stems, and siliques, and, to a lower extent, in leaves, flowers, and roots (at protein level). Highly expressed in root and shoot phloem companion cells.

Its subcellular location is the cytoplasm. The protein localises to the cell membrane. Its function is as follows. Binds medium- and long-chain acyl-CoA esters with very high affinity. May function as an intracellular carrier of acyl-CoA esters. Confers resistance to cold and freezing. Interacts with phosphatidylcholine and derivatives, but not phosphatidic acid and lysophosphatidylcholine. May be involved in phospholipid metabolism. The polypeptide is Acyl-CoA-binding domain-containing protein 6 (ACBP6) (Arabidopsis thaliana (Mouse-ear cress)).